The primary structure comprises 318 residues: Acetyl-coenzyme A carboxylase carboxyl transferase subunit alpha (318 aa).

Residues 32 to 293 (NLSDELERLR…KERLVSQLDR (262 aa)) form the CoA carboxyltransferase C-terminal domain.

Belongs to the AccA family. In terms of assembly, acetyl-CoA carboxylase is a heterohexamer composed of biotin carboxyl carrier protein (AccB), biotin carboxylase (AccC) and two subunits each of ACCase subunit alpha (AccA) and ACCase subunit beta (AccD).

It localises to the cytoplasm. The catalysed reaction is N(6)-carboxybiotinyl-L-lysyl-[protein] + acetyl-CoA = N(6)-biotinyl-L-lysyl-[protein] + malonyl-CoA. It functions in the pathway lipid metabolism; malonyl-CoA biosynthesis; malonyl-CoA from acetyl-CoA: step 1/1. Functionally, component of the acetyl coenzyme A carboxylase (ACC) complex. First, biotin carboxylase catalyzes the carboxylation of biotin on its carrier protein (BCCP) and then the CO(2) group is transferred by the carboxyltransferase to acetyl-CoA to form malonyl-CoA. This Saccharophagus degradans (strain 2-40 / ATCC 43961 / DSM 17024) protein is Acetyl-coenzyme A carboxylase carboxyl transferase subunit alpha.